The chain runs to 385 residues: Chaperone protein DnaJ (385 aa).

A J domain is found at D5 to G70. The CR-type zinc finger occupies G143–D221. Zn(2+)-binding residues include C156, C159, C173, C176, C195, C198, C209, and C212. 4 CXXCXGXG motif repeats span residues C156–G163, C173–G180, C195–G202, and C209–G216. Positions G299–M323 are disordered.

It belongs to the DnaJ family. In terms of assembly, homodimer. It depends on Zn(2+) as a cofactor.

It localises to the cytoplasm. Its function is as follows. Participates actively in the response to hyperosmotic and heat shock by preventing the aggregation of stress-denatured proteins and by disaggregating proteins, also in an autonomous, DnaK-independent fashion. Unfolded proteins bind initially to DnaJ; upon interaction with the DnaJ-bound protein, DnaK hydrolyzes its bound ATP, resulting in the formation of a stable complex. GrpE releases ADP from DnaK; ATP binding to DnaK triggers the release of the substrate protein, thus completing the reaction cycle. Several rounds of ATP-dependent interactions between DnaJ, DnaK and GrpE are required for fully efficient folding. Also involved, together with DnaK and GrpE, in the DNA replication of plasmids through activation of initiation proteins. The polypeptide is Chaperone protein DnaJ (Jannaschia sp. (strain CCS1)).